The primary structure comprises 153 residues: 3-hydroxyacyl-[acyl-carrier-protein] dehydratase FabZ (153 aa).

The active site involves histidine 57.

It belongs to the thioester dehydratase family. FabZ subfamily.

The protein resides in the cytoplasm. It catalyses the reaction a (3R)-hydroxyacyl-[ACP] = a (2E)-enoyl-[ACP] + H2O. Its function is as follows. Involved in unsaturated fatty acids biosynthesis. Catalyzes the dehydration of short chain beta-hydroxyacyl-ACPs and long chain saturated and unsaturated beta-hydroxyacyl-ACPs. The sequence is that of 3-hydroxyacyl-[acyl-carrier-protein] dehydratase FabZ from Aeromonas hydrophila subsp. hydrophila (strain ATCC 7966 / DSM 30187 / BCRC 13018 / CCUG 14551 / JCM 1027 / KCTC 2358 / NCIMB 9240 / NCTC 8049).